We begin with the raw amino-acid sequence, 253 residues long: Triosephosphate isomerase (253 aa).

Residue 9 to 11 (NWK) coordinates substrate. The Electrophile role is filled by His-95. The active-site Proton acceptor is Glu-167. Substrate contacts are provided by residues Gly-173, Ser-213, and 234-235 (GG). Ser-213 bears the Phosphoserine mark.

This sequence belongs to the triosephosphate isomerase family. Homodimer.

It is found in the cytoplasm. It carries out the reaction D-glyceraldehyde 3-phosphate = dihydroxyacetone phosphate. Its pathway is carbohydrate biosynthesis; gluconeogenesis. It functions in the pathway carbohydrate degradation; glycolysis; D-glyceraldehyde 3-phosphate from glycerone phosphate: step 1/1. In terms of biological role, involved in the gluconeogenesis. Catalyzes stereospecifically the conversion of dihydroxyacetone phosphate (DHAP) to D-glyceraldehyde-3-phosphate (G3P). This is Triosephosphate isomerase from Bacillus pumilus (strain SAFR-032).